Consider the following 351-residue polypeptide: Histidine protein kinase SaeS (351 aa).

A run of 2 helical transmembrane segments spans residues 9 to 29 (IIIG…IAYI) and 40 to 60 (TLTL…SIFI). The region spanning 61 to 114 (NPLIQKIKQFNIKTKQFANGNYASNDKTFNSPKEIYELNQSFNKMASEITQQMN) is the HAMP domain. Residues 129 to 348 (NLAHDLKTPL…TMTVTLHKLD (220 aa)) enclose the Histidine kinase domain. At His132 the chain carries Phosphohistidine; by autocatalysis.

Autophosphorylated.

Its subcellular location is the cell membrane. The catalysed reaction is ATP + protein L-histidine = ADP + protein N-phospho-L-histidine.. Member of the two-component regulatory system SaeR/SaeS involved in the regulation of staphylococcal virulence factors in a strain-dependent fashion. Probably functions as a membrane-associated protein kinase that upon sensing the appropriate signal, autophosphorylates and in turn activates the cytosolic response regulator SaeR. The protein is Histidine protein kinase SaeS (saeS) of Staphylococcus aureus (strain USA300).